The following is a 420-amino-acid chain: Histidine--tRNA ligase (420 aa).

Belongs to the class-II aminoacyl-tRNA synthetase family. Homodimer.

The protein resides in the cytoplasm. It carries out the reaction tRNA(His) + L-histidine + ATP = L-histidyl-tRNA(His) + AMP + diphosphate + H(+). This Saccharopolyspora erythraea (strain ATCC 11635 / DSM 40517 / JCM 4748 / NBRC 13426 / NCIMB 8594 / NRRL 2338) protein is Histidine--tRNA ligase.